The chain runs to 88 residues: Small ribosomal subunit protein bS16 (88 aa).

This sequence belongs to the bacterial ribosomal protein bS16 family.

The protein is Small ribosomal subunit protein bS16 of Anaeromyxobacter dehalogenans (strain 2CP-1 / ATCC BAA-258).